The primary structure comprises 202 residues: Putative 5'(3')-deoxyribonucleotidase (202 aa).

The active-site Nucleophile is the Asp22. Mg(2+) contacts are provided by Asp22, Asp24, and Asp156. Residue Asp24 is the Proton donor of the active site.

Belongs to the 5'(3')-deoxyribonucleotidase family. It depends on Mg(2+) as a cofactor.

Its function is as follows. Dephosphorylates the 5' and 2'(3')-phosphates of deoxyribonucleotides. This Chlorobaculum tepidum (strain ATCC 49652 / DSM 12025 / NBRC 103806 / TLS) (Chlorobium tepidum) protein is Putative 5'(3')-deoxyribonucleotidase.